Reading from the N-terminus, the 470-residue chain is O-acyltransferase pboC (470 aa).

Active-site proton acceptor residues include H149 and D386.

The protein belongs to the plant acyltransferase family. Monomer.

It participates in secondary metabolite biosynthesis. O-acetyltransferase; part of the gene cluster that mediates the biosynthesis of protubonine B, a hydroxylated and diacetylated cyclo-L-Trp-L-Leu derivative. Within the pathway, pboC catalyzes the acetylation of protubonine D at the hydroxy group to produce protubonine C. The first step of the protubonine B synthesis is performed by the nonribosomal peptide synthetase pboA that catalyzes the formation of cyclo-L-Trp-L-Leu by condensing L-Leu with L-Trp. The flavin-dependent monooxygenase pboD is responsible for hydroxylation at C-3 of the indole ring and subsequent formation of the pyrrolidine ring, leadind to protubonine D. Protubonine D is further diacetylated by two acetyltransferases, pboB and pboC, to form the final product protubonine B via protubonine C. In Aspergillus ustus, this protein is O-acyltransferase pboC.